The following is a 688-amino-acid chain: Mitochondrial potassium channel ATP-binding subunit (688 aa).

The transit peptide at 1–31 directs the protein to the mitochondrion; sequence MLFHFLQAGLRQCRPPARLVGLETGLSGARG. Transmembrane regions (helical) follow at residues 115-135, 168-188, 268-288, and 342-362; these read PQLI…LLNI, LKLL…IVLL, GLLL…GSFL, and VLGV…NCIV. In terms of domain architecture, ABC transmembrane type-1 spans 121 to 409; that stretch reads LTAVLLAFGA…MSVLFGQVVR (289 aa). The 238-residue stretch at 442–679 folds into the ABC transporter domain; the sequence is IHFKDVSFSY…GGLYADLIRR (238 aa). 477-484 contacts ATP; it reads GQSGGGKS.

It belongs to the ABC transporter superfamily. ABCB family. Multidrug resistance exporter (TC 3.A.1.201) subfamily. Component of the mitochondrial potassium channel (mitoK(ATP)).

It is found in the mitochondrion inner membrane. Functionally, ATP-binding subunit of the mitochondrial ATP-gated potassium channel (mitoK(ATP)). Together with pore-forming subunit CCDC51/MITOK of the mitoK(ATP) channel, mediates ATP-dependent potassium currents across the mitochondrial inner membrane. An increase in ATP intracellular levels closes the channel, inhibiting K(+) transport, whereas a decrease in ATP levels enhances K(+) uptake in the mitochondrial matrix. Plays a role in mitochondrial iron transport. Required for maintenance of normal cardiac function, possibly by influencing mitochondrial iron export and regulating the maturation of cytosolic iron sulfur cluster-containing enzymes. The sequence is that of Mitochondrial potassium channel ATP-binding subunit from Xenopus tropicalis (Western clawed frog).